Consider the following 172-residue polypeptide: Spermidine/spermine N(1)-acetyltransferase (172 aa).

The N-acetyltransferase domain occupies 3 to 172 (VKMKKCSRED…TDLIMAKTLI (170 aa)). Residues 96-98 (IYI), 105-109 (HGLGK), and 135-137 (NEN) contribute to the acetyl-CoA site. Residue Tyr142 is the Proton donor of the active site. Acetyl-CoA is bound at residue Lys144.

It belongs to the acetyltransferase family. Monomer.

The enzyme catalyses an alkane-alpha,omega-diamine + acetyl-CoA = an N-acetylalkane-alpha,omega-diamine + CoA + H(+). Involved in the protection against polyamine toxicity by regulating their concentration. Could also be involved in the negative control of sporulation as well as production of degradative enzymes such as alpha-amylase, levansucrase and alkaline phosphatase. Catalyzes the transfer of an acetyl group from acetyl coenzyme A (AcCoA) to an acceptor substrate and releases both CoA and the acetylated product. It possesses N1-acetyltransferase activity toward polyamine substrates including spermidine, spermine, aminopropylcadaverine, norspermidine, homospermidine, N(8)-acetylspermidine, diaminopropane and agmatine. This chain is Spermidine/spermine N(1)-acetyltransferase, found in Bacillus subtilis (strain 168).